Here is an 85-residue protein sequence, read N- to C-terminus: Beta-insect depressant toxin Lqh-dprIT3g (85 aa).

An N-terminal signal peptide occupies residues 1–21; it reads MKLLLLLTISASMLIEGLVNA. Positions 22 to 82 constitute an LCN-type CS-alpha/beta domain; it reads DGYIRGGDGC…EWDYETDTCG (61 aa). 4 cysteine pairs are disulfide-bonded: cysteine 31/cysteine 81, cysteine 35/cysteine 56, cysteine 42/cysteine 63, and cysteine 46/cysteine 65. Glycine 82 bears the Glycine amide mark.

Belongs to the long (4 C-C) scorpion toxin superfamily. Sodium channel inhibitor family. Beta subfamily. In terms of tissue distribution, expressed by the venom gland.

It localises to the secreted. Its function is as follows. Depressant insect beta-toxins cause a transient contraction paralysis followed by a slow flaccid paralysis. They bind voltage-independently at site-4 of sodium channels (Nav) and block action potentials, primarily by depolarizing the axonal membrane and suppressing the sodium current. This depressant toxin is active only on insects. It is found in a relatively small amount in the venom. This Leiurus hebraeus (Hebrew deathstalker scorpion) protein is Beta-insect depressant toxin Lqh-dprIT3g.